A 184-amino-acid chain; its full sequence is Transcription termination/antitermination protein NusG (184 aa).

The protein belongs to the NusG family.

Participates in transcription elongation, termination and antitermination. In Borreliella burgdorferi (strain ATCC 35210 / DSM 4680 / CIP 102532 / B31) (Borrelia burgdorferi), this protein is Transcription termination/antitermination protein NusG.